The chain runs to 107 residues: Large ribosomal subunit protein eL33A (107 aa).

A2 is modified (N-acetylalanine; partial). A Glycyl lysine isopeptide (Lys-Gly) (interchain with G-Cter in ubiquitin) cross-link involves residue K47.

This sequence belongs to the eukaryotic ribosomal protein eL33 family. As to quaternary structure, component of the large ribosomal subunit (LSU). Mature yeast ribosomes consist of a small (40S) and a large (60S) subunit. The 40S small subunit contains 1 molecule of ribosomal RNA (18S rRNA) and 33 different proteins (encoded by 57 genes). The large 60S subunit contains 3 rRNA molecules (25S, 5.8S and 5S rRNA) and 46 different proteins (encoded by 81 genes). In terms of processing, N-terminally acetylated by acetyltransferase NatA.

The protein resides in the cytoplasm. Component of the ribosome, a large ribonucleoprotein complex responsible for the synthesis of proteins in the cell. The small ribosomal subunit (SSU) binds messenger RNAs (mRNAs) and translates the encoded message by selecting cognate aminoacyl-transfer RNA (tRNA) molecules. The large subunit (LSU) contains the ribosomal catalytic site termed the peptidyl transferase center (PTC), which catalyzes the formation of peptide bonds, thereby polymerizing the amino acids delivered by tRNAs into a polypeptide chain. The nascent polypeptides leave the ribosome through a tunnel in the LSU and interact with protein factors that function in enzymatic processing, targeting, and the membrane insertion of nascent chains at the exit of the ribosomal tunnel. In Saccharomyces cerevisiae (strain ATCC 204508 / S288c) (Baker's yeast), this protein is Large ribosomal subunit protein eL33A.